The chain runs to 100 residues: Small ribosomal subunit protein bS18 (100 aa).

The segment at 1-23 (MTFIRKPAGQAKPQKYSTDAYGR) is disordered.

This sequence belongs to the bacterial ribosomal protein bS18 family. In terms of assembly, part of the 30S ribosomal subunit. Forms a tight heterodimer with protein bS6.

Its function is as follows. Binds as a heterodimer with protein bS6 to the central domain of the 16S rRNA, where it helps stabilize the platform of the 30S subunit. This is Small ribosomal subunit protein bS18 from Endomicrobium trichonymphae.